A 227-amino-acid chain; its full sequence is Agamous-like MADS-box protein AGL8 homolog (227 aa).

The region spanning 3 to 57 (RGRVQLKRIENKINRQVTFSKRRSGLLKKAHEISVLCDAEVGLIVFSTKGKLFEY) is the MADS-box domain. A K-box domain is found at 88–178 (PVSWTLEHRK…SKKVKEREKS (91 aa)).

As to expression, flower specific.

It localises to the nucleus. Probable transcription factor. This Solanum lycopersicum (Tomato) protein is Agamous-like MADS-box protein AGL8 homolog (TDR4).